The chain runs to 452 residues: Lichenan permease IIC component (452 aa).

Residues 8–421 form the PTS EIIC type-3 domain; it reads LEEKVMPIAG…AVSFVVYYPF (414 aa). 10 helical membrane-spanning segments follow: residues 31–51, 72–92, 104–124, 138–158, 187–207, 218–238, 246–266, 291–311, 351–373, and 402–422; these read GIIL…IGNL, LAYP…FGIA, LSAG…QVPF, GIPL…IAMV, FVAL…RLIV, IVSV…GGSL, LLWA…APIW, FFDI…VVTM, LLLP…MSTG, and SGAV…YPFF.

Its subcellular location is the cell membrane. Its function is as follows. The phosphoenolpyruvate-dependent sugar phosphotransferase system (PTS), a major carbohydrate active -transport system, catalyzes the phosphorylation of incoming sugar substrates concomitant with their translocation across the cell membrane. This system is involved in lichenan transport. The sequence is that of Lichenan permease IIC component (licC) from Bacillus subtilis (strain 168).